The chain runs to 418 residues: Serine hydroxymethyltransferase (418 aa).

Residues L121 and 125–127 (GHL) contribute to the (6S)-5,6,7,8-tetrahydrofolate site. The residue at position 230 (K230) is an N6-(pyridoxal phosphate)lysine. Residues E246 and 355-357 (SPF) each bind (6S)-5,6,7,8-tetrahydrofolate.

This sequence belongs to the SHMT family. In terms of assembly, homodimer. Requires pyridoxal 5'-phosphate as cofactor.

The protein localises to the cytoplasm. The catalysed reaction is (6R)-5,10-methylene-5,6,7,8-tetrahydrofolate + glycine + H2O = (6S)-5,6,7,8-tetrahydrofolate + L-serine. It participates in one-carbon metabolism; tetrahydrofolate interconversion. Its pathway is amino-acid biosynthesis; glycine biosynthesis; glycine from L-serine: step 1/1. Catalyzes the reversible interconversion of serine and glycine with tetrahydrofolate (THF) serving as the one-carbon carrier. This reaction serves as the major source of one-carbon groups required for the biosynthesis of purines, thymidylate, methionine, and other important biomolecules. Also exhibits THF-independent aldolase activity toward beta-hydroxyamino acids, producing glycine and aldehydes, via a retro-aldol mechanism. This is Serine hydroxymethyltransferase from Streptococcus pneumoniae serotype 4 (strain ATCC BAA-334 / TIGR4).